The primary structure comprises 280 residues: Urease accessory protein UreD 1 (280 aa).

Belongs to the UreD family. In terms of assembly, ureD, UreF and UreG form a complex that acts as a GTP-hydrolysis-dependent molecular chaperone, activating the urease apoprotein by helping to assemble the nickel containing metallocenter of UreC. The UreE protein probably delivers the nickel.

The protein localises to the cytoplasm. Required for maturation of urease via the functional incorporation of the urease nickel metallocenter. The protein is Urease accessory protein UreD 1 of Bradyrhizobium sp. (strain BTAi1 / ATCC BAA-1182).